The following is a 254-amino-acid chain: 30 kDa major early protein (254 aa).

The polypeptide is 30 kDa major early protein (Human cytomegalovirus (strain Eisenhardt) (HHV-5)).